Reading from the N-terminus, the 354-residue chain is Thiamine thiazole synthase (354 aa).

Residues Ala83, Glu104–Ala105, Gly112, and Val177 contribute to the substrate site. A 2,3-didehydroalanine (Cys) modification is found at Cys210. Substrate contacts are provided by residues Asp212, His227, Met305, and Arg315–Arg317.

It belongs to the THI4 family. Homooctamer. Requires Fe cation as cofactor. In terms of processing, during the catalytic reaction, a sulfide is transferred from Cys-210 to a reaction intermediate, generating a dehydroalanine residue.

The protein resides in the cytoplasm. Its subcellular location is the nucleus. It carries out the reaction [ADP-thiazole synthase]-L-cysteine + glycine + NAD(+) = [ADP-thiazole synthase]-dehydroalanine + ADP-5-ethyl-4-methylthiazole-2-carboxylate + nicotinamide + 3 H2O + 2 H(+). In terms of biological role, involved in biosynthesis of the thiamine precursor thiazole. Catalyzes the conversion of NAD and glycine to adenosine diphosphate 5-(2-hydroxyethyl)-4-methylthiazole-2-carboxylic acid (ADT), an adenylated thiazole intermediate. The reaction includes an iron-dependent sulfide transfer from a conserved cysteine residue of the protein to a thiazole intermediate. The enzyme can only undergo a single turnover, which suggests it is a suicide enzyme. May have additional roles in adaptation to various stress conditions and in DNA damage tolerance. The sequence is that of Thiamine thiazole synthase from Candida albicans (strain WO-1) (Yeast).